The chain runs to 284 residues: Bifunctional protein FolD (284 aa).

Residues 163-165 (GAS), Ile-188, and Ile-229 each bind NADP(+).

Belongs to the tetrahydrofolate dehydrogenase/cyclohydrolase family. In terms of assembly, homodimer.

It carries out the reaction (6R)-5,10-methylene-5,6,7,8-tetrahydrofolate + NADP(+) = (6R)-5,10-methenyltetrahydrofolate + NADPH. It catalyses the reaction (6R)-5,10-methenyltetrahydrofolate + H2O = (6R)-10-formyltetrahydrofolate + H(+). The protein operates within one-carbon metabolism; tetrahydrofolate interconversion. Functionally, catalyzes the oxidation of 5,10-methylenetetrahydrofolate to 5,10-methenyltetrahydrofolate and then the hydrolysis of 5,10-methenyltetrahydrofolate to 10-formyltetrahydrofolate. In Nautilia profundicola (strain ATCC BAA-1463 / DSM 18972 / AmH), this protein is Bifunctional protein FolD.